The following is a 325-amino-acid chain: Small ribosomal subunit biogenesis GTPase RsgA (325 aa).

The CP-type G domain maps to 80-241; that stretch reads LSKQIHIIAS…IIDTPGIKGF (162 aa). Residues 129-132 and 183-191 each bind GTP; these read NKID and GHSGVGKST. Residues Cys-265, Cys-270, His-272, and Cys-278 each coordinate Zn(2+).

This sequence belongs to the TRAFAC class YlqF/YawG GTPase family. RsgA subfamily. In terms of assembly, monomer. Associates with 30S ribosomal subunit, binds 16S rRNA. Zn(2+) serves as cofactor.

It is found in the cytoplasm. Functionally, one of several proteins that assist in the late maturation steps of the functional core of the 30S ribosomal subunit. Helps release RbfA from mature subunits. May play a role in the assembly of ribosomal proteins into the subunit. Circularly permuted GTPase that catalyzes slow GTP hydrolysis, GTPase activity is stimulated by the 30S ribosomal subunit. This chain is Small ribosomal subunit biogenesis GTPase RsgA, found in Flavobacterium johnsoniae (strain ATCC 17061 / DSM 2064 / JCM 8514 / BCRC 14874 / CCUG 350202 / NBRC 14942 / NCIMB 11054 / UW101) (Cytophaga johnsonae).